The chain runs to 152 residues: uncharacterized protein (152 aa).

Belongs to the transposase 8 family.

This is an uncharacterized protein from Sinorhizobium fredii (strain NBRC 101917 / NGR234).